Consider the following 155-residue polypeptide: Protein SREK1IP1 (155 aa).

A CCHC-type zinc finger spans residues 13–30 (AGCKKCGYPGHLTFECRN). The interval 44–155 (VSSTSSEDSD…TPNSSEFSRK (112 aa)) is disordered. A Phosphoserine modification is found at Ser52. A compositionally biased stretch (basic and acidic residues) spans 66-84 (QEKRINEEEEKKKEKSKEK). Basic residues predominate over residues 85 to 94 (IKLKKKRKRS). A phosphoserine mark is found at Ser96 and Ser97. Residues 107–142 (QKKQKYQKKEKKKEKKSKSKKGKHHKKEKKKRKKEK) show a composition bias toward basic residues. Position 146 is a phosphothreonine (Thr146). The span at 146–155 (TPNSSEFSRK) shows a compositional bias: polar residues.

As to quaternary structure, interacts with SREK1/SFRS12.

In terms of biological role, possible splicing regulator involved in the control of cellular survival. The protein is Protein SREK1IP1 (SREK1IP1) of Homo sapiens (Human).